A 118-amino-acid polypeptide reads, in one-letter code: Large ribosomal subunit protein bL20 (118 aa).

The protein belongs to the bacterial ribosomal protein bL20 family.

Binds directly to 23S ribosomal RNA and is necessary for the in vitro assembly process of the 50S ribosomal subunit. It is not involved in the protein synthesizing functions of that subunit. This chain is Large ribosomal subunit protein bL20, found in Buchnera aphidicola subsp. Acyrthosiphon pisum (strain 5A).